We begin with the raw amino-acid sequence, 2291 residues long: Spectrin beta chain (2291 aa).

The tract at residues 1–271 (MTTDISIVRW…IITYVVTYYH (271 aa)) is actin-binding. 2 consecutive Calponin-homology (CH) domains span residues 50-154 (SVQK…LRFQ) and 169-274 (KSAK…HYFS). Spectrin repeat units follow at residues 300-408 (VHDY…ALRE), 420-521 (AARF…MRLE), 525-633 (QLQQ…RLEE), 636-739 (KLWQ…RLEN), 743-843 (YFQL…QRLL), 848-948 (LYKL…MDDL), 954-1057 (VQTF…KLEE), 1060-1166 (DLHR…VLLS), 1170-1272 (DQQL…EKLK), 1276-1376 (KLHE…GAML), 1386-1484 (QQTC…KALE), 1488-1591 (EAFQ…HLLE), 1594-1697 (KVQQ…RLNE), 1701-1802 (LFML…TQML), 1807-1909 (ELHK…QKLA), 1913-2015 (DLFR…ENLQ), and 2020-2089 (VYQF…KEMK). The span at 2097-2140 (EAERQRIKEEQEAKAASEAAEQAKREAERRDDVDVGASHDDSER) shows a compositional bias: basic and acidic residues. The tract at residues 2097-2152 (EAERQRIKEEQEAKAASEAAEQAKREAERRDDVDVGASHDDSERGGTPGAGEGHEG) is disordered. The 113-residue stretch at 2147-2259 (GEGHEGYVTR…WVTSLKAQSD (113 aa)) folds into the PH domain. Phosphoserine is present on Ser-2195. The segment covering 2262-2275 (AVAASRSQTLPATS) has biased composition (polar residues). Residues 2262-2291 (AVAASRSQTLPATSQKDEPKRRSFFTLKKK) are disordered.

The protein belongs to the spectrin family. Native spectrin molecule is a tetramer composed of two antiparallel heterodimers joined head to head so that each end of the native molecule includes the C-terminus of the alpha subunit and the N-terminus of the beta subunit.

It localises to the cytoplasm. It is found in the cytoskeleton. The protein localises to the cell cortex. Its function is as follows. Spectrin is the major constituent of the cytoskeletal network underlying the erythrocyte plasma membrane. It associates with band 4.1 and actin to form the cytoskeletal superstructure of the erythrocyte plasma membrane. Interacts with calmodulin in a calcium-dependent manner. The protein is Spectrin beta chain (beta-Spec) of Drosophila melanogaster (Fruit fly).